A 596-amino-acid polypeptide reads, in one-letter code: Aspartate--tRNA(Asp/Asn) ligase (596 aa).

An L-aspartate-binding site is contributed by E173. The interval 197–200 (QLFK) is aspartate. R219 provides a ligand contact to L-aspartate. Residues 219-221 (RDE) and Q228 each bind ATP. H450 serves as a coordination point for L-aspartate. E485 provides a ligand contact to ATP. R492 lines the L-aspartate pocket. 537-540 (GLDR) provides a ligand contact to ATP.

Belongs to the class-II aminoacyl-tRNA synthetase family. Type 1 subfamily. In terms of assembly, homodimer.

The protein resides in the cytoplasm. It carries out the reaction tRNA(Asx) + L-aspartate + ATP = L-aspartyl-tRNA(Asx) + AMP + diphosphate. Functionally, aspartyl-tRNA synthetase with relaxed tRNA specificity since it is able to aspartylate not only its cognate tRNA(Asp) but also tRNA(Asn). Reaction proceeds in two steps: L-aspartate is first activated by ATP to form Asp-AMP and then transferred to the acceptor end of tRNA(Asp/Asn). The chain is Aspartate--tRNA(Asp/Asn) ligase from Hydrogenovibrio crunogenus (strain DSM 25203 / XCL-2) (Thiomicrospira crunogena).